Here is a 146-residue protein sequence, read N- to C-terminus: Hemoglobin subunit beta (146 aa).

One can recognise a Globin domain in the interval 2–146 (QWSDSERTII…VVMFLGKQYH (145 aa)). Histidine 63 and histidine 92 together coordinate heme b.

The protein belongs to the globin family. Heterotetramer of two alpha chains and two beta chains. As to expression, red blood cells.

Involved in oxygen transport from the lung to the various peripheral tissues. The sequence is that of Hemoglobin subunit beta (hbb) from Artedidraco orianae (Barbeled plunderfish).